Consider the following 565-residue polypeptide: Proline--tRNA ligase (565 aa).

Belongs to the class-II aminoacyl-tRNA synthetase family. ProS type 1 subfamily. As to quaternary structure, homodimer.

Its subcellular location is the cytoplasm. The enzyme catalyses tRNA(Pro) + L-proline + ATP = L-prolyl-tRNA(Pro) + AMP + diphosphate. In terms of biological role, catalyzes the attachment of proline to tRNA(Pro) in a two-step reaction: proline is first activated by ATP to form Pro-AMP and then transferred to the acceptor end of tRNA(Pro). As ProRS can inadvertently accommodate and process non-cognate amino acids such as alanine and cysteine, to avoid such errors it has two additional distinct editing activities against alanine. One activity is designated as 'pretransfer' editing and involves the tRNA(Pro)-independent hydrolysis of activated Ala-AMP. The other activity is designated 'posttransfer' editing and involves deacylation of mischarged Ala-tRNA(Pro). The misacylated Cys-tRNA(Pro) is not edited by ProRS. In Lactobacillus delbrueckii subsp. bulgaricus (strain ATCC BAA-365 / Lb-18), this protein is Proline--tRNA ligase.